The primary structure comprises 319 residues: MVVVVDTVSDKPIRPRHPEKAARPDALSPKKPDWIRVRAPTSRGYADTRAIVKENGLHTVCEEAGCPNIGECWDRKHATFMIMGDTCTRACAFCNVKTGMPAALDGAEPANVAEATAKLGLAHLVITSVDRDDLADGGAAHIAATIRAVRERCPSTTIEVLTPDFLRKDGALEIVVAAKPDVFNHNLETVPARYLEVRPGARYFHSIRLLQRAKEIDPTLFTKSGIMLGLGEQRSEVLQVMDDLRSADVDFLTIGQYLQPTLKHHAVMSYIPPEEFSSYESLAYAKGFLMVSSSPMTRSSHHAGADFAKLQAARAALPR.

Residues 1-29 (MVVVVDTVSDKPIRPRHPEKAARPDALSP) form a disordered region. The segment covering 8-29 (VSDKPIRPRHPEKAARPDALSP) has biased composition (basic and acidic residues). The [4Fe-4S] cluster site is built by C61, C66, C72, C87, C91, C94, and S300. Positions 73-289 (WDRKHATFMI…ESLAYAKGFL (217 aa)) constitute a Radical SAM core domain.

The protein belongs to the radical SAM superfamily. Lipoyl synthase family. The cofactor is [4Fe-4S] cluster.

The protein localises to the cytoplasm. The catalysed reaction is [[Fe-S] cluster scaffold protein carrying a second [4Fe-4S](2+) cluster] + N(6)-octanoyl-L-lysyl-[protein] + 2 oxidized [2Fe-2S]-[ferredoxin] + 2 S-adenosyl-L-methionine + 4 H(+) = [[Fe-S] cluster scaffold protein] + N(6)-[(R)-dihydrolipoyl]-L-lysyl-[protein] + 4 Fe(3+) + 2 hydrogen sulfide + 2 5'-deoxyadenosine + 2 L-methionine + 2 reduced [2Fe-2S]-[ferredoxin]. Its pathway is protein modification; protein lipoylation via endogenous pathway; protein N(6)-(lipoyl)lysine from octanoyl-[acyl-carrier-protein]: step 2/2. Functionally, catalyzes the radical-mediated insertion of two sulfur atoms into the C-6 and C-8 positions of the octanoyl moiety bound to the lipoyl domains of lipoate-dependent enzymes, thereby converting the octanoylated domains into lipoylated derivatives. The sequence is that of Lipoyl synthase from Rhodopseudomonas palustris (strain BisA53).